The following is a 271-amino-acid chain: Histone chaperone asf-1 (271 aa).

A disordered region spans residues Lys-152–Gln-271. Acidic residues-rich tracts occupy residues Pro-168–Ala-185 and Ile-211–Ile-258.

Belongs to the ASF1 family. Interacts with histone H3 and histone H4.

The protein resides in the nucleus. Histone chaperone that facilitates histone deposition and histone exchange and removal during nucleosome assembly and disassembly. This Neurospora crassa (strain ATCC 24698 / 74-OR23-1A / CBS 708.71 / DSM 1257 / FGSC 987) protein is Histone chaperone asf-1 (asf-1).